The chain runs to 189 residues: Adenylate kinase (189 aa).

Ala-10–Thr-15 serves as a coordination point for ATP. The NMP stretch occupies residues Ser-30–Val-59. AMP is bound by residues Thr-31, Arg-36, Glu-57–Val-59, Gly-85–Arg-88, and Gln-92. The interval Lys-126–Asp-136 is LID. Residue Arg-127 participates in ATP binding. Positions 133 and 144 each coordinate AMP. Ala-172 provides a ligand contact to ATP.

It belongs to the adenylate kinase family. In terms of assembly, monomer.

The protein localises to the cytoplasm. The enzyme catalyses AMP + ATP = 2 ADP. The protein operates within purine metabolism; AMP biosynthesis via salvage pathway; AMP from ADP: step 1/1. In terms of biological role, catalyzes the reversible transfer of the terminal phosphate group between ATP and AMP. Plays an important role in cellular energy homeostasis and in adenine nucleotide metabolism. The protein is Adenylate kinase of Caulobacter sp. (strain K31).